The following is a 632-amino-acid chain: tRNA uridine 5-carboxymethylaminomethyl modification enzyme MnmG (632 aa).

Residues 15-20, I127, and S182 contribute to the FAD site; that span reads GAGHAG. 276 to 290 serves as a coordination point for NAD(+); it reads GPRYCPSIEDKIVRF. Residue Q373 coordinates FAD.

The protein belongs to the MnmG family. As to quaternary structure, homodimer. Heterotetramer of two MnmE and two MnmG subunits. It depends on FAD as a cofactor.

The protein localises to the cytoplasm. Functionally, NAD-binding protein involved in the addition of a carboxymethylaminomethyl (cmnm) group at the wobble position (U34) of certain tRNAs, forming tRNA-cmnm(5)s(2)U34. The chain is tRNA uridine 5-carboxymethylaminomethyl modification enzyme MnmG from Streptococcus pyogenes serotype M2 (strain MGAS10270).